The chain runs to 86 residues: Small ribosomal subunit protein uS15 (86 aa).

The interval 1 to 22 is disordered; sequence MSIDTQKVIEDNKRSSADTGSP. Positions 7–16 are enriched in basic and acidic residues; that stretch reads KVIEDNKRSS.

The protein belongs to the universal ribosomal protein uS15 family. Part of the 30S ribosomal subunit. Forms a bridge to the 50S subunit in the 70S ribosome, contacting the 23S rRNA.

In terms of biological role, one of the primary rRNA binding proteins, it binds directly to 16S rRNA where it helps nucleate assembly of the platform of the 30S subunit by binding and bridging several RNA helices of the 16S rRNA. Functionally, forms an intersubunit bridge (bridge B4) with the 23S rRNA of the 50S subunit in the ribosome. This chain is Small ribosomal subunit protein uS15, found in Stenotrophomonas maltophilia (strain R551-3).